The sequence spans 291 residues: Gamma-sarcoglycan (291 aa).

The chain crosses the membrane as a helical; Signal-anchor for type II membrane protein span at residues 38–58 (LFVLLLLIILLVNFALTIWIL). Over 59–291 (KVMWFSPTGM…TCHEHSHICL (233 aa)) the chain is Extracellular. Asn110 is a glycosylation site (N-linked (GlcNAc...) asparagine). 2 cysteine pairs are disulfide-bonded: Cys265-Cys290 and Cys267-Cys283.

This sequence belongs to the sarcoglycan beta/delta/gamma/zeta family. In terms of assembly, interacts with the syntrophin SNTA1. Cross-link to form 2 major subcomplexes: one consisting of SGCB, SGCD and SGCG and the other consisting of SGCB and SGCD. The association between SGCB and SGCG is particularly strong while SGCA is loosely associated with the other sarcoglycans. Interacts with FLNC. Disulfide bonds are present.

Its subcellular location is the cell membrane. The protein resides in the sarcolemma. The protein localises to the cytoplasm. It is found in the cytoskeleton. Functionally, component of the sarcoglycan complex, a subcomplex of the dystrophin-glycoprotein complex which forms a link between the F-actin cytoskeleton and the extracellular matrix. This is Gamma-sarcoglycan (SGCG) from Canis lupus familiaris (Dog).